The chain runs to 253 residues: MPNYALADLLEKTKIEQILQLAEINAELEALSAQERVRWALANLGSEFALASSFGIQSAVMLHLVTNESPKVPVILTDTGYLFPETYQFIDQLTLRLSLNLYVYRAEISSAWQEARHGKLWEQGVDGIKQYNRLNKVEPMRRALDELNVSAWFSGLRREQSSSRASLPVLAIQNGVFKFLPLIDWTDNDIEQYLNQYDLPYHPLRDEGYLSMGDTHTTKKWEPGMTEEETRFFGLKRECGLHEEDAESDGSGI.

The active-site Nucleophile; cysteine thiosulfonate intermediate is the C239.

It belongs to the PAPS reductase family. CysH subfamily.

Its subcellular location is the cytoplasm. It catalyses the reaction [thioredoxin]-disulfide + sulfite + adenosine 3',5'-bisphosphate + 2 H(+) = [thioredoxin]-dithiol + 3'-phosphoadenylyl sulfate. It participates in sulfur metabolism; hydrogen sulfide biosynthesis; sulfite from sulfate: step 3/3. Its function is as follows. Catalyzes the formation of sulfite from phosphoadenosine 5'-phosphosulfate (PAPS) using thioredoxin as an electron donor. The polypeptide is Phosphoadenosine 5'-phosphosulfate reductase (Photobacterium profundum (strain SS9)).